Here is a 404-residue protein sequence, read N- to C-terminus: F-box protein At2g17036 (404 aa).

Positions 2-50 (MDWATLPKDLLDLISKCLESSFDLIQFRSVCSSWRSAAGPKRLLWAHNL) constitute an F-box domain.

This Arabidopsis thaliana (Mouse-ear cress) protein is F-box protein At2g17036.